The chain runs to 343 residues: uncharacterized protein (343 aa).

Belongs to the histone deacetylase family.

Functionally, putative deacetylase. This is an uncharacterized protein from Methanocaldococcus jannaschii (strain ATCC 43067 / DSM 2661 / JAL-1 / JCM 10045 / NBRC 100440) (Methanococcus jannaschii).